Consider the following 401-residue polypeptide: Probable tRNA sulfurtransferase (401 aa).

In terms of domain architecture, THUMP spans Thr63–Arg168. ATP-binding positions include Leu186–Leu187, Tyr211–Phe212, Arg268, Gly290, and Gln299.

It belongs to the ThiI family.

The protein resides in the cytoplasm. It carries out the reaction [ThiI sulfur-carrier protein]-S-sulfanyl-L-cysteine + a uridine in tRNA + 2 reduced [2Fe-2S]-[ferredoxin] + ATP + H(+) = [ThiI sulfur-carrier protein]-L-cysteine + a 4-thiouridine in tRNA + 2 oxidized [2Fe-2S]-[ferredoxin] + AMP + diphosphate. The catalysed reaction is [ThiS sulfur-carrier protein]-C-terminal Gly-Gly-AMP + S-sulfanyl-L-cysteinyl-[cysteine desulfurase] + AH2 = [ThiS sulfur-carrier protein]-C-terminal-Gly-aminoethanethioate + L-cysteinyl-[cysteine desulfurase] + A + AMP + 2 H(+). Its pathway is cofactor biosynthesis; thiamine diphosphate biosynthesis. Catalyzes the ATP-dependent transfer of a sulfur to tRNA to produce 4-thiouridine in position 8 of tRNAs, which functions as a near-UV photosensor. Also catalyzes the transfer of sulfur to the sulfur carrier protein ThiS, forming ThiS-thiocarboxylate. This is a step in the synthesis of thiazole, in the thiamine biosynthesis pathway. The sulfur is donated as persulfide by IscS. This is Probable tRNA sulfurtransferase from Treponema pallidum subsp. pallidum (strain SS14).